A 210-amino-acid polypeptide reads, in one-letter code: Thymidylate kinase (210 aa).

10–17 (GPEGAGKS) provides a ligand contact to ATP.

This sequence belongs to the thymidylate kinase family.

The enzyme catalyses dTMP + ATP = dTDP + ADP. In terms of biological role, phosphorylation of dTMP to form dTDP in both de novo and salvage pathways of dTTP synthesis. This is Thymidylate kinase from Pseudomonas paraeruginosa (strain DSM 24068 / PA7) (Pseudomonas aeruginosa (strain PA7)).